Reading from the N-terminus, the 207-residue chain is Large ribosomal subunit protein uL4 (207 aa).

The tract at residues 47-78 (GTHKVKNRSEVRGGGRKPWRQKGTGRARQGSI) is disordered. Basic residues predominate over residues 60–71 (GGRKPWRQKGTG).

This sequence belongs to the universal ribosomal protein uL4 family. In terms of assembly, part of the 50S ribosomal subunit.

Functionally, one of the primary rRNA binding proteins, this protein initially binds near the 5'-end of the 23S rRNA. It is important during the early stages of 50S assembly. It makes multiple contacts with different domains of the 23S rRNA in the assembled 50S subunit and ribosome. Forms part of the polypeptide exit tunnel. This Listeria innocua serovar 6a (strain ATCC BAA-680 / CLIP 11262) protein is Large ribosomal subunit protein uL4.